Consider the following 95-residue polypeptide: Osteocalcin-2 (95 aa).

The N-terminal stretch at 1 to 23 (MRTLSLLTLLALAALCLSDLTDA) is a signal peptide. A propeptide spanning residues 24-49 (KPSGPESDKAFMSKQEGNKVVNRLRR) is cleaved from the precursor. Residues 46-92 (RLRRYLGASVPSPDPLEPTREQCELNPACDELSDQYGLKTAYKRIYG) form the Gla domain. Residues Glu-62, Glu-66, Glu-69, and Asp-75 each contribute to the Ca(2+) site. Cys-68 and Cys-74 are joined by a disulfide.

This sequence belongs to the osteocalcin/matrix Gla protein family. In terms of processing, gamma-carboxyglutamate residues are formed by vitamin K dependent carboxylation by GGCX. These residues are essential for the binding of calcium. Carboxylated in a Ptprv/Esp-dependent process. Decarboxylation promotes the hormone activity. As to expression, bone.

It is found in the secreted. Functionally, the carboxylated form is one of the main organic components of the bone matrix, which constitutes 1-2% of the total bone protein: it acts as a negative regulator of bone formation and is required to limit bone formation without impairing bone resorption or mineralization. The carboxylated form binds strongly to apatite and calcium. The uncarboxylated form acts as a hormone secreted by osteoblasts, which regulates different cellular processes, such as energy metabolism, male fertility and brain development. Regulates of energy metabolism by acting as a hormone favoring pancreatic beta-cell proliferation, insulin secretion and sensitivity and energy expenditure. Uncarboxylated osteocalcin hormone also promotes testosterone production in the testes: acts as a ligand for G protein-coupled receptor GPRC6A at the surface of Leydig cells, initiating a signaling response that promotes the expression of enzymes required for testosterone synthesis in a CREB-dependent manner. Also acts as a regulator of brain development: osteocalcin hormone crosses the blood-brain barrier and acts as a ligand for GPR158 on neurons, initiating a signaling response that prevents neuronal apoptosis in the hippocampus, favors the synthesis of all monoamine neurotransmitters and inhibits that of gamma-aminobutyric acid (GABA). Osteocalcin also crosses the placenta during pregnancy and maternal osteocalcin is required for fetal brain development. This is Osteocalcin-2 (Bglap2) from Mus musculus (Mouse).